We begin with the raw amino-acid sequence, 293 residues long: 4-hydroxy-tetrahydrodipicolinate synthase 1 (293 aa).

Residue Thr46 participates in pyruvate binding. Tyr134 (proton donor/acceptor) is an active-site residue. Catalysis depends on Lys162, which acts as the Schiff-base intermediate with substrate. Ile204 is a binding site for pyruvate.

Belongs to the DapA family. As to quaternary structure, homotetramer; dimer of dimers.

It localises to the cytoplasm. The enzyme catalyses L-aspartate 4-semialdehyde + pyruvate = (2S,4S)-4-hydroxy-2,3,4,5-tetrahydrodipicolinate + H2O + H(+). It participates in amino-acid biosynthesis; L-lysine biosynthesis via DAP pathway; (S)-tetrahydrodipicolinate from L-aspartate: step 3/4. Catalyzes the condensation of (S)-aspartate-beta-semialdehyde [(S)-ASA] and pyruvate to 4-hydroxy-tetrahydrodipicolinate (HTPA). This Clostridium acetobutylicum (strain ATCC 824 / DSM 792 / JCM 1419 / IAM 19013 / LMG 5710 / NBRC 13948 / NRRL B-527 / VKM B-1787 / 2291 / W) protein is 4-hydroxy-tetrahydrodipicolinate synthase 1.